The chain runs to 416 residues: MALSITRGLLLLAALCCLAPTSLAGVLQGHAVQETDDTAHQEAACHKIAPNLANFAFSIYHKLAHQSNTSNIFFSPVSIASAFAMLSLGAKGNTHTEILEGLGFNLTELAEAEIHKGFQHLLHTLNQPNHQLQLTTGNGLFINESAKLVDTFLEDVKNLHHSKAFSINFRDAEEAKKKINDYVEKGSHGKIVDLVKDLDQDTVFALVNYISFKGKWEKPFEVEHTTERDFHVNEQTTVKVPMMNRLGMFDLHYCDKLASWVLLLDYVGNVTACFILPDLGKLQQLEDKLNNELLAKFLEKKYASSANLHLPKLSISETYDLKTVLGELGINRVFSNGADLSGITEEQPLMVSKALHKAALTIDEKGTEAAGATFLEAIPMSLPPDVEFNRPFLCILYDRNTKSPLFVGKVVNPTQA.

A signal peptide spans 1–24 (MALSITRGLLLLAALCCLAPTSLA). Asn68, Asn105, Asn143, and Asn269 each carry an N-linked (GlcNAc...) asparagine glycan. Residues 371–390 (GATFLEAIPMSLPPDVEFNR) form an RCL region. A Phosphoserine modification is found at Ser381.

It belongs to the serpin family. In terms of assembly, interacts with CELA2A. Interacts with ERGIC3 and LMAN1/ERGIC53. Interacts with PRSS1/Trypsin. Plasma.

Its subcellular location is the secreted. In terms of biological role, inhibits human leukocyte elastase, pig pancreatic elastase and bovine trypsin on a 1:1 molar basis. In Ovis aries (Sheep), this protein is Alpha-1-antiproteinase.